A 346-amino-acid chain; its full sequence is N-acetyl-gamma-glutamyl-phosphate reductase (346 aa).

Cys-150 is a catalytic residue.

This sequence belongs to the NAGSA dehydrogenase family. Type 1 subfamily.

Its subcellular location is the cytoplasm. The catalysed reaction is N-acetyl-L-glutamate 5-semialdehyde + phosphate + NADP(+) = N-acetyl-L-glutamyl 5-phosphate + NADPH + H(+). The protein operates within amino-acid biosynthesis; L-arginine biosynthesis; N(2)-acetyl-L-ornithine from L-glutamate: step 3/4. Functionally, catalyzes the NADPH-dependent reduction of N-acetyl-5-glutamyl phosphate to yield N-acetyl-L-glutamate 5-semialdehyde. The sequence is that of N-acetyl-gamma-glutamyl-phosphate reductase from Desulforamulus reducens (strain ATCC BAA-1160 / DSM 100696 / MI-1) (Desulfotomaculum reducens).